A 215-amino-acid chain; its full sequence is Cytochrome c biogenesis ATP-binding export protein CcmA (215 aa).

In terms of domain architecture, ABC transporter spans 3 to 215 (LEAENLAGER…MAAFSVEDIA (213 aa)). 35–42 (GPNGSGKS) contributes to the ATP binding site.

The protein belongs to the ABC transporter superfamily. CcmA exporter (TC 3.A.1.107) family. The complex is composed of two ATP-binding proteins (CcmA) and two transmembrane proteins (CcmB).

The protein localises to the cell inner membrane. It catalyses the reaction heme b(in) + ATP + H2O = heme b(out) + ADP + phosphate + H(+). Functionally, part of the ABC transporter complex CcmAB involved in the biogenesis of c-type cytochromes; once thought to export heme, this seems not to be the case, but its exact role is uncertain. Responsible for energy coupling to the transport system. This is Cytochrome c biogenesis ATP-binding export protein CcmA from Brucella abortus (strain 2308).